Consider the following 188-residue polypeptide: GTP cyclohydrolase 1 (188 aa).

Positions 78, 81, and 150 each coordinate Zn(2+).

The protein belongs to the GTP cyclohydrolase I family. In terms of assembly, toroid-shaped homodecamer, composed of two pentamers of five dimers.

It catalyses the reaction GTP + H2O = 7,8-dihydroneopterin 3'-triphosphate + formate + H(+). It functions in the pathway cofactor biosynthesis; 7,8-dihydroneopterin triphosphate biosynthesis; 7,8-dihydroneopterin triphosphate from GTP: step 1/1. This Geobacillus kaustophilus (strain HTA426) protein is GTP cyclohydrolase 1.